We begin with the raw amino-acid sequence, 458 residues long: Monomethylamine methyltransferase MtmB2 (458 aa).

Pyl-202 is a non-standard amino acid (pyrrolysine).

The protein belongs to the monomethylamine methyltransferase family. In terms of assembly, can form a complex with MtmC (MtmC1 or MtmC2).

It catalyses the reaction Co(I)-[methylamine-specific corrinoid protein] + methylamine + H(+) = methyl-Co(III)-[methylamine-specific corrinoid protein] + NH4(+). It participates in one-carbon metabolism; methanogenesis from methylamine. Catalyzes the transfer of the methyl group from monomethylamine to the corrinoid cofactor of MtmC (MtmC1 or MtmC2). The polypeptide is Monomethylamine methyltransferase MtmB2 (mtmB2) (Methanosarcina barkeri).